A 3083-amino-acid chain; its full sequence is Laminin subunit alpha-1 (3083 aa).

A signal peptide spans 1-24 (MRGSGTGAALLVLLASVLWVTVRS). The residue at position 25 (Gln25) is a Pyrrolidone carboxylic acid. The Laminin N-terminal domain occupies 25-276 (QQRGLFPAIL…SIKDISVGGM (252 aa)). Cystine bridges form between Cys277/Cys286, Cys279/Cys297, Cys299/Cys308, Cys311/Cys331, Cys334/Cys343, and Cys336/Cys368. Laminin EGF-like domains are found at residues 277-333 (CICY…ECEE), 334-403 (CNCH…PCRP), 404-460 (CNCD…NCIP), and 461-509 (CDCR…GCSE). Asn370 is a glycosylation site (N-linked (GlcNAc...) asparagine). Intrachain disulfides connect Cys371/Cys380, Cys383/Cys401, Cys404/Cys416, Cys406/Cys434, Cys436/Cys445, Cys448/Cys458, Cys461/Cys474, Cys463/Cys478, Cys480/Cys489, and Cys492/Cys507. Residues 510–519 (CFCFGVSGVC) enclose the Laminin EGF-like 5; first part domain. The region spanning 523–715 (TWSISQVTNM…DLAVAADVEH (193 aa)) is the Laminin IV type A 1 domain. N-linked (GlcNAc...) asparagine glycosylation is present at Asn672. Residues 716 to 748 (CECPQGYTGTSCEACLPGYYRVDGILFGGICQP) enclose the Laminin EGF-like 5; second part domain. Disulfide bonds link Cys749-Cys758, Cys751-Cys764, Cys767-Cys776, Cys779-Cys795, Cys798-Cys813, Cys800-Cys823, Cys826-Cys835, Cys838-Cys853, Cys856-Cys870, Cys858-Cys877, Cys880-Cys889, Cys892-Cys906, Cys909-Cys921, Cys911-Cys928, Cys930-Cys939, Cys942-Cys955, Cys958-Cys970, Cys960-Cys976, Cys978-Cys987, Cys990-Cys1002, Cys1005-Cys1014, Cys1007-Cys1021, Cys1023-Cys1032, Cys1035-Cys1048, Cys1051-Cys1063, Cys1053-Cys1070, Cys1072-Cys1081, Cys1084-Cys1094, Cys1097-Cys1109, Cys1099-Cys1125, Cys1127-Cys1136, and Cys1139-Cys1154. Laminin EGF-like domains follow at residues 749–797 (CECH…DCQP), 798–855 (CACP…TCVP), 856–908 (CNCS…NCRA), 909–957 (CDCH…GCVP), 958–1004 (CNCS…GCTP), 1005–1050 (CDCA…GCQA), 1051–1096 (CNCS…DCVP), and 1097–1156 (CGCD…GCSP). The Cell attachment site motif lies at 1147–1149 (RGD). The Laminin EGF-like 14; first part domain maps to 1157-1166 (CFCFGLSQLC). The Laminin IV type A 2 domain maps to 1177–1368 (ITLASDQPLL…EGEAALLLEL (192 aa)). Asn1344 carries N-linked (GlcNAc...) asparagine glycosylation. Positions 1369-1409 (CVCPPGTAGHSCQDCAPGYYREKLPESGGRGPRPLLAPCVP) constitute a Laminin EGF-like 14; second part domain. 12 cysteine pairs are disulfide-bonded: Cys1410-Cys1419, Cys1412-Cys1426, Cys1429-Cys1438, Cys1441-Cys1456, Cys1459-Cys1473, Cys1461-Cys1483, Cys1486-Cys1495, Cys1498-Cys1513, Cys1516-Cys1528, Cys1518-Cys1535, Cys1537-Cys1546, and Cys1549-Cys1560. Laminin EGF-like domains lie at 1410 to 1458 (CNCN…DCTP), 1459 to 1515 (CTCP…SCQT), and 1516 to 1562 (CDCN…DCVS). Residues 1564–2123 (DDDCVGPLLN…SRARKQVASI (560 aa)) are domain II and I. Residues 1617-1691 (AKKIRAEIQL…VATLNQTARK (75 aa)) adopt a coiled-coil conformation. Asn1659, Asn1686, Asn1718, Asn1725, Asn1763, and Asn1811 each carry an N-linked (GlcNAc...) asparagine glycan. A coiled-coil region spans residues 1723-1809 (QQNATLELKA…QEKKLRVQEE (87 aa)). Residues 1868–1901 (KRRARDLVHRAEQHASELQSRAGALDRDLENVRN) adopt a coiled-coil conformation. 4 N-linked (GlcNAc...) asparagine glycosylation sites follow: Asn1935, Asn2026, Asn2045, and Asn2066. Laminin G-like domains lie at 2124 to 2304 (KVAV…CNGC), 2312 to 2488 (DSSF…RKGC), 2493 to 2679 (IQSV…LDTC), 2721 to 2893 (AHQF…VDRC), and 2898 to 3078 (QEGT…PHSC). A disulfide bond links Cys2278 and Cys2304. A glycan (N-linked (GlcNAc...) asparagine) is linked at Asn2355. 2 cysteine pairs are disulfide-bonded: Cys2464/Cys2488 and Cys2652/Cys2679. N-linked (GlcNAc...) asparagine glycosylation is present at Asn2834. Residues Cys2868 and Cys2893 are joined by a disulfide bond. N-linked (GlcNAc...) asparagine glycosylation is present at Asn2923. A disulfide bridge connects residues Cys3047 and Cys3078.

As to quaternary structure, laminin is a complex glycoprotein, consisting of three different polypeptide chains (alpha, beta, gamma), which are bound to each other by disulfide bonds into a cross-shaped molecule comprising one long and three short arms with globules at each end. Alpha-1 is a subunit of laminin-1 (laminin-111 or EHS laminin) and laminin-3 (laminin-121 or S-laminin). Post-translationally, tyrosine phosphorylated by PKDCC/VLK.

The protein localises to the secreted. It localises to the extracellular space. The protein resides in the extracellular matrix. It is found in the basement membrane. Functionally, binding to cells via a high affinity receptor, laminin is thought to mediate the attachment, migration and organization of cells into tissues during embryonic development by interacting with other extracellular matrix components. The protein is Laminin subunit alpha-1 (Lama1) of Mus musculus (Mouse).